The sequence spans 814 residues: Valine--tRNA ligase (814 aa).

The 'HIGH' region signature appears at 46–56 (PTVSGQLHIGH). The 'KMSKS' region motif lies at 536-540 (KMSKS). Lys539 provides a ligand contact to ATP.

This sequence belongs to the class-I aminoacyl-tRNA synthetase family. ValS type 2 subfamily. As to quaternary structure, monomer.

It is found in the cytoplasm. It catalyses the reaction tRNA(Val) + L-valine + ATP = L-valyl-tRNA(Val) + AMP + diphosphate. In terms of biological role, catalyzes the attachment of valine to tRNA(Val). As ValRS can inadvertently accommodate and process structurally similar amino acids such as threonine, to avoid such errors, it has a 'posttransfer' editing activity that hydrolyzes mischarged Thr-tRNA(Val) in a tRNA-dependent manner. This is Valine--tRNA ligase from Rickettsia prowazekii (strain Madrid E).